The primary structure comprises 378 residues: MSHLDNGFRSLTLQRFPATDDVNPLQAWEAADEYLLQQLDDTEIRGPVLILNDAFGALSCALAEHKPYSIGDSYISELATRENLRLNGIDESSVKFLDSTADYPQQPGVVLIKVPKTLALLEQQLRALRKVVTSDTRIIAGAKARDIHTSTLELFEKVLGPTTTTLAWKKARLINCTFNEPQLADAPQTVSWKLEGTDWTIHNHANVFSRTGLDIGARFFMQHLPENLEGEIVDLGCGNGVIGLTLLDKNPQAKVVFVDESPMAVASSRLNVETNMPEALDRCEFMINNALSGVEPFRFNAVLCNPPFHQQHALTDNVAWEMFHHARRCLKINGELYIVANRHLDYFHKLKKIFGNCTTIATNNKFVVLKAVKLGRRR.

It belongs to the methyltransferase superfamily. RlmG family.

It is found in the cytoplasm. It catalyses the reaction guanosine(1835) in 23S rRNA + S-adenosyl-L-methionine = N(2)-methylguanosine(1835) in 23S rRNA + S-adenosyl-L-homocysteine + H(+). In terms of biological role, specifically methylates the guanine in position 1835 (m2G1835) of 23S rRNA. In Escherichia coli (strain ATCC 8739 / DSM 1576 / NBRC 3972 / NCIMB 8545 / WDCM 00012 / Crooks), this protein is Ribosomal RNA large subunit methyltransferase G.